A 354-amino-acid polypeptide reads, in one-letter code: D-alanine--D-alanine ligase (354 aa).

The region spanning 133 to 338 is the ATP-grasp domain; sequence KHLFAQAGLP…YSDLIEQLVE (206 aa). 166–221 provides a ligand contact to ATP; sequence EKELGYPCFVKPANLGSSVGISKCRNREELEKAFELAFEYDRKIVVEEGIAGREIE. Mg(2+) contacts are provided by aspartate 292, glutamate 305, and asparagine 307.

This sequence belongs to the D-alanine--D-alanine ligase family. Mg(2+) serves as cofactor. The cofactor is Mn(2+).

It localises to the cytoplasm. The enzyme catalyses 2 D-alanine + ATP = D-alanyl-D-alanine + ADP + phosphate + H(+). It functions in the pathway cell wall biogenesis; peptidoglycan biosynthesis. Its function is as follows. Cell wall formation. In Bacillus velezensis (strain DSM 23117 / BGSC 10A6 / LMG 26770 / FZB42) (Bacillus amyloliquefaciens subsp. plantarum), this protein is D-alanine--D-alanine ligase.